Reading from the N-terminus, the 67-residue chain is MAELPIAPIDRLIRKAGAERVSEDAAKALAEYLEEYAIEVGKKATEFARHAGRKTVKAEDVRLAVKA.

Interaction with DNA stretches follow at residues 20-22 (RVS) and 54-57 (KTVK).

It belongs to the archaeal histone HMF family. Heterodimer. Dimers then assemble into higher oligomers, with the DNA wrapped around the protein core.

It localises to the cytoplasm. The protein localises to the chromosome. Functionally, binds and compact DNA (95 to 150 base pairs) to form nucleosome-like structures that contain positive DNA supercoils. Increases the resistance of DNA to thermal denaturation (in vitro). This Thermococcus zilligii protein is Archaeal histone HAN1 subunit A (han1A).